The primary structure comprises 585 residues: Squalene epoxidase 2, mitochondrial (585 aa).

The N-terminal 45 residues, 1–45 (MKPFVIRNLPRFQSTLRSSLLYTNHRPSSRFSLSTRRFTTGATYI), are a transit peptide targeting the mitochondrion. A helical transmembrane segment spans residues 70 to 90 (AKIALDQFIASLFTFLLLYIL). FAD contacts are provided by residues 132–133 (VA), 152–153 (ER), Arg160, Arg231, Val247, Asp409, and Met422. Helical transmembrane passes span 493–513 (FDYL…LSGL), 520–540 (LVLH…LPFP), and 545–565 (FWLG…IIKA).

Belongs to the squalene monooxygenase family. It depends on FAD as a cofactor. In terms of tissue distribution, expressed mainly in inflorescences. Detected in seedlings, leaves, stems, and siliques.

The protein resides in the mitochondrion membrane. It catalyses the reaction squalene + reduced [NADPH--hemoprotein reductase] + O2 = (S)-2,3-epoxysqualene + oxidized [NADPH--hemoprotein reductase] + H2O + H(+). It functions in the pathway terpene metabolism; lanosterol biosynthesis; lanosterol from farnesyl diphosphate: step 2/3. In terms of biological role, catalyzes the stereospecific oxidation of squalene to (S)-2,3-epoxysqualene, and is considered to be a rate-limiting enzyme in steroid biosynthesis. Produces primarily oxidosqualene. In Arabidopsis thaliana (Mouse-ear cress), this protein is Squalene epoxidase 2, mitochondrial (SQE2).